A 299-amino-acid polypeptide reads, in one-letter code: NAD kinase 1 (299 aa).

The active-site Proton acceptor is the Asp-62. NAD(+) is bound by residues 62-63, Lys-67, 143-144, Lys-173, and Asp-175; these read DG and ND.

The protein belongs to the NAD kinase family. It depends on a divalent metal cation as a cofactor.

The protein localises to the cytoplasm. It carries out the reaction NAD(+) + ATP = ADP + NADP(+) + H(+). Involved in the regulation of the intracellular balance of NAD and NADP, and is a key enzyme in the biosynthesis of NADP. Catalyzes specifically the phosphorylation on 2'-hydroxyl of the adenosine moiety of NAD to yield NADP. In Prochlorococcus marinus subsp. pastoris (strain CCMP1986 / NIES-2087 / MED4), this protein is NAD kinase 1.